The following is a 188-amino-acid chain: Peptidyl-tRNA hydrolase (188 aa).

TRNA is bound at residue Y14. Residue H19 is the Proton acceptor of the active site. Positions 64, 66, and 113 each coordinate tRNA.

It belongs to the PTH family. Monomer.

The protein localises to the cytoplasm. The enzyme catalyses an N-acyl-L-alpha-aminoacyl-tRNA + H2O = an N-acyl-L-amino acid + a tRNA + H(+). In terms of biological role, hydrolyzes ribosome-free peptidyl-tRNAs (with 1 or more amino acids incorporated), which drop off the ribosome during protein synthesis, or as a result of ribosome stalling. Its function is as follows. Catalyzes the release of premature peptidyl moieties from peptidyl-tRNA molecules trapped in stalled 50S ribosomal subunits, and thus maintains levels of free tRNAs and 50S ribosomes. This Chloroflexus aggregans (strain MD-66 / DSM 9485) protein is Peptidyl-tRNA hydrolase.